The following is a 106-amino-acid chain: MAPKQPNTGLFVGLNKGHIVTKKELAPRPSDRKGKTSKRTHFVRNLIREVAGFXPYEKRITELLKVGKDKRALKVRQEKVGHSQESKEEERGDVQCSPPDEGWWWY.

Over residues 75-93 (VRQEKVGHSQESKEEERGD) the composition is skewed to basic and acidic residues. Residues 75-106 (VRQEKVGHSQESKEEERGDVQCSPPDEGWWWY) form a disordered region.

It belongs to the eukaryotic ribosomal protein eL36 family.

The chain is Large ribosomal subunit protein eL36 (RPL36) from Daucus carota (Wild carrot).